A 210-amino-acid polypeptide reads, in one-letter code: Na(+)-translocating NADH-quinone reductase subunit D (210 aa).

A run of 6 helical transmembrane segments spans residues 42 to 62, 66 to 86, 103 to 123, 131 to 151, 154 to 174, and 178 to 198; these read VVMT…ISTI, IPNS…VIVV, VYVG…AFAM, FMDG…VGAF, LFGS…NGGW, and NGLL…IWAV.

This sequence belongs to the NqrDE/RnfAE family. As to quaternary structure, composed of six subunits; NqrA, NqrB, NqrC, NqrD, NqrE and NqrF.

The protein resides in the cell inner membrane. The enzyme catalyses a ubiquinone + n Na(+)(in) + NADH + H(+) = a ubiquinol + n Na(+)(out) + NAD(+). In terms of biological role, NQR complex catalyzes the reduction of ubiquinone-1 to ubiquinol by two successive reactions, coupled with the transport of Na(+) ions from the cytoplasm to the periplasm. NqrA to NqrE are probably involved in the second step, the conversion of ubisemiquinone to ubiquinol. The chain is Na(+)-translocating NADH-quinone reductase subunit D from Psychromonas ingrahamii (strain DSM 17664 / CCUG 51855 / 37).